The following is a 443-amino-acid chain: Xaa-Pro dipeptidase (443 aa).

The Mn(2+) site is built by Asp246, Asp257, His339, Glu384, and Glu423.

Belongs to the peptidase M24B family. Bacterial-type prolidase subfamily. Requires Mn(2+) as cofactor.

The catalysed reaction is Xaa-L-Pro dipeptide + H2O = an L-alpha-amino acid + L-proline. Splits dipeptides with a prolyl residue in the C-terminal position. This is Xaa-Pro dipeptidase from Cronobacter sakazakii (strain ATCC BAA-894) (Enterobacter sakazakii).